A 176-amino-acid chain; its full sequence is Ribosome maturation factor RimM (176 aa).

The PRC barrel domain maps to 96–176 (PEDEFYWRDL…QILVDWDPDF (81 aa)).

It belongs to the RimM family. Binds ribosomal protein uS19.

It is found in the cytoplasm. In terms of biological role, an accessory protein needed during the final step in the assembly of 30S ribosomal subunit, possibly for assembly of the head region. Essential for efficient processing of 16S rRNA. May be needed both before and after RbfA during the maturation of 16S rRNA. It has affinity for free ribosomal 30S subunits but not for 70S ribosomes. In Shewanella piezotolerans (strain WP3 / JCM 13877), this protein is Ribosome maturation factor RimM.